Reading from the N-terminus, the 316-residue chain is Mitochondrial GTPase 1 (316 aa).

The region spanning 28-203 (MKQMQQKLKQ…LLDTPGILKP (176 aa)) is the CP-type G domain. GTP is bound by residues 73–76 (NKKD), 147–152 (NVGKSS), and glycine 199.

Belongs to the TRAFAC class YlqF/YawG GTPase family. MTG1 subfamily.

It localises to the mitochondrion inner membrane. Functionally, plays a role in the regulation of the mitochondrial ribosome assembly and of translational activity. Displays mitochondrial GTPase activity. The polypeptide is Mitochondrial GTPase 1 (Aedes aegypti (Yellowfever mosquito)).